Reading from the N-terminus, the 183-residue chain is Putative 3-methyladenine DNA glycosylase (183 aa).

It belongs to the DNA glycosylase MPG family.

The chain is Putative 3-methyladenine DNA glycosylase from Legionella pneumophila (strain Corby).